The primary structure comprises 140 residues: Small ribosomal subunit protein uS12 (140 aa).

P59 carries the post-translational modification Hydroxyproline.

This sequence belongs to the universal ribosomal protein uS12 family.

This chain is Small ribosomal subunit protein uS12 (RPS23), found in Encephalitozoon cuniculi (strain GB-M1) (Microsporidian parasite).